Here is a 467-residue protein sequence, read N- to C-terminus: tRNA(Ile)-lysidine synthase (467 aa).

35–40 (SGGPDS) contacts ATP.

The protein belongs to the tRNA(Ile)-lysidine synthase family.

The protein localises to the cytoplasm. The catalysed reaction is cytidine(34) in tRNA(Ile2) + L-lysine + ATP = lysidine(34) in tRNA(Ile2) + AMP + diphosphate + H(+). Functionally, ligates lysine onto the cytidine present at position 34 of the AUA codon-specific tRNA(Ile) that contains the anticodon CAU, in an ATP-dependent manner. Cytidine is converted to lysidine, thus changing the amino acid specificity of the tRNA from methionine to isoleucine. The protein is tRNA(Ile)-lysidine synthase of Caldanaerobacter subterraneus subsp. tengcongensis (strain DSM 15242 / JCM 11007 / NBRC 100824 / MB4) (Thermoanaerobacter tengcongensis).